A 295-amino-acid polypeptide reads, in one-letter code: Craniofacial development protein 1 (295 aa).

Composition is skewed to acidic residues over residues 1 to 18 (MEEFDSEDFSTSDEDEDY) and 25 to 43 (YSEDDVNELVKEDEVDGEE). Disordered stretches follow at residues 1–155 (MEEF…KPKE) and 188–219 (FLKQTEKEKPQALVTSAATPPPAGSGIKRTSG). Residues 49–65 (KGKRRKAQSIPARKRKQ) are compositionally biased toward basic residues. The segment covering 70–93 (LDEEEDGEEDSGGSSREEDEEEQE) has biased composition (acidic residues). Phosphoserine is present on residues serine 80, serine 83, serine 84, and serine 112. Over residues 120–130 (KSKAASSSQVK) the composition is skewed to low complexity. 2 stretches are compositionally biased toward basic and acidic residues: residues 145 to 155 (VKADELEKPKE) and 188 to 197 (FLKQTEKEKP). A Glycyl lysine isopeptide (Lys-Gly) (interchain with G-Cter in SUMO2) cross-link involves residue lysine 146. The tract at residues 174–213 (VTKEVDATSKEAKSFLKQTEKEKPQALVTSAATPPPAGSG) is hydrophilic. Serine 212 carries the phosphoserine modification. The 82-residue stretch at 214–295 (IKRTSGMSSL…RDLRLSKMKP (82 aa)) folds into the BCNT-C domain. The residue at position 215 (lysine 215) is an N6-methyllysine. The residue at position 246 (serine 246) is a Phosphoserine.

It localises to the chromosome. Its subcellular location is the centromere. The protein localises to the kinetochore. Its function is as follows. May play a role during embryogenesis. The chain is Craniofacial development protein 1 (Cfdp1) from Rattus norvegicus (Rat).